The sequence spans 514 residues: 2,3-bisphosphoglycerate-independent phosphoglycerate mutase (514 aa).

Mn(2+) is bound by residues Asp13 and Ser63. Ser63 serves as the catalytic Phosphoserine intermediate. Substrate is bound by residues His124, 154–155 (RD), Arg186, Arg192, 258–261 (RADR), and Lys332. Mn(2+) is bound by residues Asp399, His403, Asp440, His441, and His459.

This sequence belongs to the BPG-independent phosphoglycerate mutase family. Monomer. Requires Mn(2+) as cofactor.

It catalyses the reaction (2R)-2-phosphoglycerate = (2R)-3-phosphoglycerate. The protein operates within carbohydrate degradation; glycolysis; pyruvate from D-glyceraldehyde 3-phosphate: step 3/5. In terms of biological role, catalyzes the interconversion of 2-phosphoglycerate and 3-phosphoglycerate. The chain is 2,3-bisphosphoglycerate-independent phosphoglycerate mutase from Legionella pneumophila (strain Lens).